Here is a 240-residue protein sequence, read N- to C-terminus: Enoyl-CoA delta isomerase 1, peroxisomal (240 aa).

The Microbody targeting signal motif lies at 238–240; sequence SKL.

This sequence belongs to the enoyl-CoA hydratase/isomerase family.

It is found in the peroxisome. It catalyses the reaction a (3Z)-enoyl-CoA = a 4-saturated (2E)-enoyl-CoA. The enzyme catalyses a (3E)-enoyl-CoA = a 4-saturated (2E)-enoyl-CoA. The protein operates within lipid metabolism; fatty acid beta-oxidation. Its function is as follows. Able to isomerize both 3-cis and 3-trans double bonds into the 2-trans form in a range of enoyl-CoA species. Essential for the beta oxidation of unsaturated fatty acids. The polypeptide is Enoyl-CoA delta isomerase 1, peroxisomal (Arabidopsis thaliana (Mouse-ear cress)).